The primary structure comprises 243 residues: Isoprenyl transferase 2 (243 aa).

The active site involves Asp23. Asp23 is a binding site for Mg(2+). Residues 24–27 (GNGR), Trp28, Arg36, His40, and 68–70 (STE) each bind substrate. Asn71 serves as the catalytic Proton acceptor. Substrate-binding positions include Trp72, Arg74, Arg191, and 197 to 199 (RTS). Residue Glu210 coordinates Mg(2+).

The protein belongs to the UPP synthase family. Homodimer. It depends on Mg(2+) as a cofactor.

Its function is as follows. Catalyzes the condensation of isopentenyl diphosphate (IPP) with allylic pyrophosphates generating different type of terpenoids. This chain is Isoprenyl transferase 2, found in Corynebacterium efficiens (strain DSM 44549 / YS-314 / AJ 12310 / JCM 11189 / NBRC 100395).